A 117-amino-acid polypeptide reads, in one-letter code: Large ribosomal subunit protein bL19 (117 aa).

Belongs to the bacterial ribosomal protein bL19 family.

Its function is as follows. This protein is located at the 30S-50S ribosomal subunit interface and may play a role in the structure and function of the aminoacyl-tRNA binding site. This chain is Large ribosomal subunit protein bL19, found in Shewanella piezotolerans (strain WP3 / JCM 13877).